A 588-amino-acid polypeptide reads, in one-letter code: UvrABC system protein C (588 aa).

The GIY-YIG domain maps to 12–89 (SKPGCYLYLN…IKKYRPKYNV (78 aa)). Residues 194–229 (NEVKTLLTNQMHKAAENLQFEEAQRIKEQIISLDFT) enclose the UVR domain.

The protein belongs to the UvrC family. As to quaternary structure, interacts with UvrB in an incision complex.

It is found in the cytoplasm. The UvrABC repair system catalyzes the recognition and processing of DNA lesions. UvrC both incises the 5' and 3' sides of the lesion. The N-terminal half is responsible for the 3' incision and the C-terminal half is responsible for the 5' incision. In Mesoplasma florum (strain ATCC 33453 / NBRC 100688 / NCTC 11704 / L1) (Acholeplasma florum), this protein is UvrABC system protein C.